Reading from the N-terminus, the 102-residue chain is Large ribosomal subunit protein mL63 (102 aa).

This sequence belongs to the mitochondrion-specific ribosomal protein mL63 family.

It localises to the mitochondrion. The protein is Large ribosomal subunit protein mL63 (MRPL57) of Bos taurus (Bovine).